The primary structure comprises 156 residues: Transcription elongation factor GreA (156 aa).

Residues 7-27 (MTQEGLDKLKLELENLKLVKR) are a coiled coil.

The protein belongs to the GreA/GreB family.

In terms of biological role, necessary for efficient RNA polymerase transcription elongation past template-encoded arresting sites. The arresting sites in DNA have the property of trapping a certain fraction of elongating RNA polymerases that pass through, resulting in locked ternary complexes. Cleavage of the nascent transcript by cleavage factors such as GreA or GreB allows the resumption of elongation from the new 3'terminus. GreA releases sequences of 2 to 3 nucleotides. In Lactococcus lactis subsp. lactis (strain IL1403) (Streptococcus lactis), this protein is Transcription elongation factor GreA.